The primary structure comprises 691 residues: DNA ligase (691 aa).

NAD(+) contacts are provided by residues aspartate 41 to aspartate 45, serine 90 to leucine 91, and glutamate 130. Lysine 132 serves as the catalytic N6-AMP-lysine intermediate. 4 residues coordinate NAD(+): arginine 153, glutamate 190, lysine 307, and lysine 331. 4 residues coordinate Zn(2+): cysteine 425, cysteine 428, cysteine 443, and cysteine 449. The 82-residue stretch at alanine 610–proline 691 folds into the BRCT domain.

This sequence belongs to the NAD-dependent DNA ligase family. LigA subfamily. Requires Mg(2+) as cofactor. It depends on Mn(2+) as a cofactor.

It catalyses the reaction NAD(+) + (deoxyribonucleotide)n-3'-hydroxyl + 5'-phospho-(deoxyribonucleotide)m = (deoxyribonucleotide)n+m + AMP + beta-nicotinamide D-nucleotide.. Functionally, DNA ligase that catalyzes the formation of phosphodiester linkages between 5'-phosphoryl and 3'-hydroxyl groups in double-stranded DNA using NAD as a coenzyme and as the energy source for the reaction. It is essential for DNA replication and repair of damaged DNA. This Burkholderia ambifaria (strain ATCC BAA-244 / DSM 16087 / CCUG 44356 / LMG 19182 / AMMD) (Burkholderia cepacia (strain AMMD)) protein is DNA ligase.